Reading from the N-terminus, the 180-residue chain is D-glycero-beta-D-manno-heptose-1,7-bisphosphate 7-phosphatase (180 aa).

Aspartate 14 acts as the Nucleophile in catalysis. Residues aspartate 14 and aspartate 16 each coordinate Mg(2+). Residues 14–16 (DRD), 22–25 (NDHY), and 56–59 (TNQS) contribute to the substrate site. Catalysis depends on aspartate 16, which acts as the Proton donor. 4 residues coordinate Zn(2+): cysteine 95, histidine 97, cysteine 110, and histidine 112. Position 113 to 114 (113 to 114 (RK)) interacts with substrate. A Mg(2+)-binding site is contributed by aspartate 139.

Belongs to the gmhB family. As to quaternary structure, monomer. Mg(2+) is required as a cofactor.

Its subcellular location is the cytoplasm. The enzyme catalyses D-glycero-beta-D-manno-heptose 1,7-bisphosphate + H2O = D-glycero-beta-D-manno-heptose 1-phosphate + phosphate. It functions in the pathway nucleotide-sugar biosynthesis; ADP-L-glycero-beta-D-manno-heptose biosynthesis; ADP-L-glycero-beta-D-manno-heptose from D-glycero-beta-D-manno-heptose 7-phosphate: step 2/4. Its pathway is bacterial outer membrane biogenesis; LPS core biosynthesis. Functionally, converts the D-glycero-beta-D-manno-heptose 1,7-bisphosphate (beta-HBP) intermediate into D-glycero-beta-D-manno-heptose 1-phosphate by removing the phosphate group at the C-7 position. Also catalyzes the dephosphorylation of D-glycero-alpha-D-manno-heptose 1,7-bisphosphate in vitro. The sequence is that of D-glycero-beta-D-manno-heptose-1,7-bisphosphate 7-phosphatase from Rhodopseudomonas palustris (strain ATCC BAA-98 / CGA009).